A 287-amino-acid polypeptide reads, in one-letter code: MELIIISGRSGAGKSVALRALEDIGYYCVDNLPIDLLPQLADILSQSQASAAISLDIRNLPNSSQHLDEILTELENKHQIKIIFLDADRSTLIRRYSDSRRLHPLSVQNQDLSLEAAIDAEQIQLDPLIQHANLIIDTAVLSTHELAERLREFLRGNSDKELKIVVESFGFKYGLPLDADYVFDVRFLPNPHWNPSLRPMTGLEQPVIDFLSKYEDVANFIYTTRNYIETWLPMLERNNRSYLTIAIGCTGGKHRSVYIAQQLGEYFQDKGKHVKIQHKSLEKHKNR.

ATP is bound at residue 8–15 (GRSGAGKS). 56-59 (DIRN) serves as a coordination point for GTP.

It belongs to the RapZ-like family.

Functionally, displays ATPase and GTPase activities. The polypeptide is Nucleotide-binding protein Asuc_0930 (Actinobacillus succinogenes (strain ATCC 55618 / DSM 22257 / CCUG 43843 / 130Z)).